The sequence spans 591 residues: L-fucose isomerase (591 aa).

Active-site proton acceptor residues include E337 and D361. Mn(2+) is bound by residues E337, D361, and H528.

Belongs to the L-fucose isomerase family. Homohexamer. It depends on Mn(2+) as a cofactor.

Its subcellular location is the cytoplasm. The catalysed reaction is L-fucose = L-fuculose. It functions in the pathway carbohydrate degradation; L-fucose degradation; L-lactaldehyde and glycerone phosphate from L-fucose: step 1/3. Its function is as follows. Converts the aldose L-fucose into the corresponding ketose L-fuculose. The chain is L-fucose isomerase from Escherichia coli (strain ATCC 8739 / DSM 1576 / NBRC 3972 / NCIMB 8545 / WDCM 00012 / Crooks).